Here is a 299-residue protein sequence, read N- to C-terminus: Proline iminopeptidase (299 aa).

The AB hydrolase-1 domain maps to 29–279 (PLLLLHGGPG…SRHMAFIDEP (251 aa)). Residue serine 105 is the Nucleophile of the active site. Aspartate 245 is an active-site residue. Catalysis depends on histidine 272, which acts as the Proton donor.

The protein belongs to the peptidase S33 family.

It localises to the cell envelope. The catalysed reaction is Release of N-terminal proline from a peptide.. Its function is as follows. Releases the N-terminal proline from various substrates. The sequence is that of Proline iminopeptidase from Levilactobacillus brevis (strain ATCC 367 / BCRC 12310 / CIP 105137 / JCM 1170 / LMG 11437 / NCIMB 947 / NCTC 947) (Lactobacillus brevis).